A 244-amino-acid polypeptide reads, in one-letter code: MVRVTLVNYTKRPLETITWAALISYWGEWSTESFERISENDVEKHLPRILGYGHESILEHATFTFSIEGCSRVCTHQLVRHRIASYTQQSQRYIVLDEENVEETFVIPESIKKDRELYEKWKKVMAETISLYKESINRGVHQEDARFILPQAVKTKIIVTMNLRELKHFFGLRLCERAQWEIREVAWKMLEEMAKRDDIRPIIKWAKLGPRCIQFGYCPERDLMPPGCLKKTRKKWEKVAESKS.

The ThyX domain occupies 2–207 (VRVTLVNYTK…DIRPIIKWAK (206 aa)). Residues S56, 80–82 (RHR), and Q88 contribute to the FAD site. DUMP-binding positions include 77–80 (QLVR), 88–92 (QQSQR), and R146. The ThyX motif motif lies at 80 to 90 (RHRIASYTQQS). Residues 162–164 (NLR) and H168 contribute to the FAD site. R173 contributes to the dUMP binding site. R173 functions as the Involved in ionization of N3 of dUMP, leading to its activation in the catalytic mechanism.

The protein belongs to the thymidylate synthase ThyX family. In terms of assembly, homotetramer. Requires FAD as cofactor.

It catalyses the reaction dUMP + (6R)-5,10-methylene-5,6,7,8-tetrahydrofolate + NADPH + H(+) = dTMP + (6S)-5,6,7,8-tetrahydrofolate + NADP(+). It participates in pyrimidine metabolism; dTTP biosynthesis. Catalyzes the reductive methylation of 2'-deoxyuridine-5'-monophosphate (dUMP) to 2'-deoxythymidine-5'-monophosphate (dTMP) while utilizing 5,10-methylenetetrahydrofolate (mTHF) as the methyl donor, and NADPH and FADH(2) as the reductant. This chain is Flavin-dependent thymidylate synthase, found in Pyrococcus furiosus (strain ATCC 43587 / DSM 3638 / JCM 8422 / Vc1).